Reading from the N-terminus, the 94-residue chain is Co-chaperonin GroES (94 aa).

It belongs to the GroES chaperonin family. As to quaternary structure, heptamer of 7 subunits arranged in a ring. Interacts with the chaperonin GroEL.

The protein resides in the cytoplasm. Together with the chaperonin GroEL, plays an essential role in assisting protein folding. The GroEL-GroES system forms a nano-cage that allows encapsulation of the non-native substrate proteins and provides a physical environment optimized to promote and accelerate protein folding. GroES binds to the apical surface of the GroEL ring, thereby capping the opening of the GroEL channel. This chain is Co-chaperonin GroES, found in Ehrlichia canis (strain Jake).